The following is a 55-amino-acid chain: Large ribosomal subunit protein bL33 (55 aa).

Post-translationally, the protein is methylated on either Ala-2 or Lys-3.

This chain is Large ribosomal subunit protein bL33, found in Rhodopseudomonas palustris (strain ATCC BAA-98 / CGA009).